Reading from the N-terminus, the 336-residue chain is Dihydroorotate dehydrogenase (quinone) (336 aa).

Residues 62–66 (AGMDK) and Thr-86 contribute to the FMN site. A substrate-binding site is contributed by Lys-66. 111-115 (NRMGF) is a binding site for substrate. FMN contacts are provided by Asn-139 and Asn-172. Asn-172 serves as a coordination point for substrate. Ser-175 functions as the Nucleophile in the catalytic mechanism. Asn-177 lines the substrate pocket. FMN-binding residues include Lys-217 and Thr-245. 246 to 247 (NT) serves as a coordination point for substrate. FMN contacts are provided by residues Gly-268, Gly-297, and 318–319 (YS).

Belongs to the dihydroorotate dehydrogenase family. Type 2 subfamily. In terms of assembly, monomer. FMN is required as a cofactor.

The protein localises to the cell membrane. It catalyses the reaction (S)-dihydroorotate + a quinone = orotate + a quinol. The protein operates within pyrimidine metabolism; UMP biosynthesis via de novo pathway; orotate from (S)-dihydroorotate (quinone route): step 1/1. In terms of biological role, catalyzes the conversion of dihydroorotate to orotate with quinone as electron acceptor. The sequence is that of Dihydroorotate dehydrogenase (quinone) from Buchnera aphidicola subsp. Schizaphis graminum (strain Sg).